The chain runs to 490 residues: MNMDIGKALSDVGGLRDITSRANNSLPPTPDSSPAAPSKKHKLYDFLESRGKIETPRKRIVFEKKPLLHKPVHIQKKPAQLCKELLIRQLGGSRSHPFSTKTSRHVGGRLNLETYYSRPSECLMMLNQLPFCLGFANNESLLAVCTETGALELFDSRFYDRQNEENQPSARRIHGWLAHNNAIFSVNFSKDDSLLATSSGDQTSKVFDLSTQQCITRLGRRGVDGYHSHSVKQVNFCNDSPYNLVSCSRDGSIIFWDMRTHGITIDGEHFQKPVLRIRKAHENSGRDCSITSATWLPQSTSQVISSCSANSALKLWDLRTVHTVRPLPAATTPELTTSKRDFGVTNVCTSPDGERIYAASRDSIIYEYSSRHLNSGFCKTYKDPRLRISSFYVKLACSPDGATLACGGGVQDKTSGVVVFDTTRNCSSSAMLTGGHTKDVTAVDWSSEGQLASISDDGSVRVWNSSLHGSAANLREKNFSEIFYWGFSEK.

Positions 18 to 40 are disordered; sequence ITSRANNSLPPTPDSSPAAPSKK. WD repeat units lie at residues 178–208, 226–257, 285–317, 339–369, 387–419, and 435–464; these read AHNNAIFSVNFSKDDSLLATSSGDQTSKVFD, YHSHSVKQVNFCNDSPYNLVSCSRDGSIIFWD, GRDCSITSATWLPQSTSQVISSCSANSALKLWD, KRDFGVTNVCTSPDGERIYAASRDSIIYEYS, RISSFYVKLACSPDGATLACGGGVQDKTSGVVV, and GHTKDVTAVDWSSEGQLASISDDGSVRVWN.

It belongs to the WD repeat cdt2 family. Component of the DCX(DTL) E3 ubiquitin ligase complex, at least composed of cul4, ddb1, cdt2 and pip1.

The protein localises to the nucleus. It functions in the pathway protein modification; protein ubiquitination. In terms of biological role, substrate-specific adapter of a DCX (DDB1-CUL4-X-box) E3 ubiquitin-protein ligase complex required for DNA replication during mitosis and meiosis. The DCX(DTL) complex, also named CRL4(CDT2) complex, mediates the polyubiquitination and subsequent degradation of cdt1 and spd1. Involved in the regulation of mitotic and pre-meiotic S-phase progression. This is Cell division cycle protein cdt2 (cdt2) from Schizosaccharomyces pombe (strain 972 / ATCC 24843) (Fission yeast).